A 707-amino-acid polypeptide reads, in one-letter code: Polyribonucleotide nucleotidyltransferase (707 aa).

Mg(2+) is bound by residues aspartate 486 and aspartate 492. Positions 553–612 constitute a KH domain; it reads PRIHKIKINPEKIKDVIGKGGSVIRMLTEETGTIIEIEDDGTIKISATIGEKAKNAIRRI. Positions 622 to 690 constitute an S1 motif domain; the sequence is GRIYSGKVTR…RQGRLRLSIK (69 aa).

The protein belongs to the polyribonucleotide nucleotidyltransferase family. In terms of assembly, component of the RNA degradosome, which is a multiprotein complex involved in RNA processing and mRNA degradation. It depends on Mg(2+) as a cofactor.

It localises to the cytoplasm. It carries out the reaction RNA(n+1) + phosphate = RNA(n) + a ribonucleoside 5'-diphosphate. Functionally, involved in mRNA degradation. Catalyzes the phosphorolysis of single-stranded polyribonucleotides processively in the 3'- to 5'-direction. This is Polyribonucleotide nucleotidyltransferase from Buchnera aphidicola subsp. Schizaphis graminum (strain Sg).